The chain runs to 154 residues: 17 kDa surface antigen (154 aa).

An N-terminal signal peptide occupies residues 1 to 19 (MKLLSKIMIIALAASMLQA). Cysteine 20 carries the N-palmitoyl cysteine lipid modification. Cysteine 20 carries S-diacylglycerol cysteine lipidation.

Belongs to the rickettsiale 17 kDa surface antigen family.

It is found in the cell outer membrane. In Rickettsia rhipicephali, this protein is 17 kDa surface antigen (omp).